A 276-amino-acid polypeptide reads, in one-letter code: MRALETIATLREYRKSLKESVGFVPTMGALHKGHQSLIERSLKENSHTIVSVFVNPTQFGANEDFSAYPRPLEKDLALCEGLGVNAVFVPKTSEMYPYEIEKRLKLYAPTFLSHSLEGAMREGHFDGVVQVVLRLFHLVNPTRAYFGKKDAQQLLIIQHLVQDLLLDIEIAPCEIVRDSDNLALSSRNVYLNATQRKQALAIPKALENIKQAIDKGEKACEKLKKLGLKILETLEVDYLEFCNHKLEPLKTIEPTNTLVLVAARVGKTRLLDNLWV.

27-34 (MGALHKGH) contributes to the ATP binding site. Residue H34 is the Proton donor of the active site. Q58 provides a ligand contact to (R)-pantoate. Residue Q58 participates in beta-alanine binding. ATP is bound at residue 147–150 (GKKD). Residue Q153 coordinates (R)-pantoate. Residues V176 and 184–187 (LSSR) contribute to the ATP site.

This sequence belongs to the pantothenate synthetase family. As to quaternary structure, homodimer.

The protein resides in the cytoplasm. The enzyme catalyses (R)-pantoate + beta-alanine + ATP = (R)-pantothenate + AMP + diphosphate + H(+). The protein operates within cofactor biosynthesis; (R)-pantothenate biosynthesis; (R)-pantothenate from (R)-pantoate and beta-alanine: step 1/1. Catalyzes the condensation of pantoate with beta-alanine in an ATP-dependent reaction via a pantoyl-adenylate intermediate. The sequence is that of Pantothenate synthetase from Helicobacter pylori (strain Shi470).